Consider the following 394-residue polypeptide: 8-amino-7-oxononanoate synthase (394 aa).

R21 serves as a coordination point for substrate. Residue 112–113 (GY) participates in pyridoxal 5'-phosphate binding. H137 contributes to the substrate binding site. Positions 183, 211, and 239 each coordinate pyridoxal 5'-phosphate. K242 carries the N6-(pyridoxal phosphate)lysine modification. T358 contributes to the substrate binding site.

Belongs to the class-II pyridoxal-phosphate-dependent aminotransferase family. BioF subfamily. As to quaternary structure, homodimer. Requires pyridoxal 5'-phosphate as cofactor.

It carries out the reaction 6-carboxyhexanoyl-[ACP] + L-alanine + H(+) = (8S)-8-amino-7-oxononanoate + holo-[ACP] + CO2. It functions in the pathway cofactor biosynthesis; biotin biosynthesis. In terms of biological role, catalyzes the decarboxylative condensation of pimeloyl-[acyl-carrier protein] and L-alanine to produce 8-amino-7-oxononanoate (AON), [acyl-carrier protein], and carbon dioxide. This Burkholderia pseudomallei (strain 1710b) protein is 8-amino-7-oxononanoate synthase.